Consider the following 26-residue polypeptide: Turripeptide OL57 (26 aa).

Post-translationally, contains 2 disulfide bonds. In terms of tissue distribution, expressed by the venom duct.

The protein resides in the secreted. Its function is as follows. Acts as a neurotoxin by inhibiting an ion channel. The sequence is that of Turripeptide OL57 from Iotyrris olangoensis (Sea snail).